Reading from the N-terminus, the 729-residue chain is Fatty acid oxidation complex subunit alpha (729 aa).

The tract at residues M1–K189 is enoyl-CoA hydratase/isomerase. D296 serves as a coordination point for substrate. Residues E311 to A729 form a 3-hydroxyacyl-CoA dehydrogenase region. Residues M324, D343, V400–E402, K407, and S429 contribute to the NAD(+) site. H450 functions as the For 3-hydroxyacyl-CoA dehydrogenase activity in the catalytic mechanism. N453 lines the NAD(+) pocket. The substrate site is built by N500 and Y660. A disordered region spans residues R708 to A729.

The protein in the N-terminal section; belongs to the enoyl-CoA hydratase/isomerase family. In the C-terminal section; belongs to the 3-hydroxyacyl-CoA dehydrogenase family. Heterotetramer of two alpha chains (FadB) and two beta chains (FadA).

It carries out the reaction a (3S)-3-hydroxyacyl-CoA + NAD(+) = a 3-oxoacyl-CoA + NADH + H(+). It catalyses the reaction a (3S)-3-hydroxyacyl-CoA = a (2E)-enoyl-CoA + H2O. The enzyme catalyses a 4-saturated-(3S)-3-hydroxyacyl-CoA = a (3E)-enoyl-CoA + H2O. The catalysed reaction is (3S)-3-hydroxybutanoyl-CoA = (3R)-3-hydroxybutanoyl-CoA. It carries out the reaction a (3Z)-enoyl-CoA = a 4-saturated (2E)-enoyl-CoA. It catalyses the reaction a (3E)-enoyl-CoA = a 4-saturated (2E)-enoyl-CoA. Its pathway is lipid metabolism; fatty acid beta-oxidation. Its function is as follows. Involved in the aerobic and anaerobic degradation of long-chain fatty acids via beta-oxidation cycle. Catalyzes the formation of 3-oxoacyl-CoA from enoyl-CoA via L-3-hydroxyacyl-CoA. It can also use D-3-hydroxyacyl-CoA and cis-3-enoyl-CoA as substrate. The sequence is that of Fatty acid oxidation complex subunit alpha from Shigella flexneri serotype 5b (strain 8401).